A 260-amino-acid polypeptide reads, in one-letter code: DNA repair protein RecO (260 aa).

The protein belongs to the RecO family.

Functionally, involved in DNA repair and RecF pathway recombination. This Chlorobaculum parvum (strain DSM 263 / NCIMB 8327) (Chlorobium vibrioforme subsp. thiosulfatophilum) protein is DNA repair protein RecO.